A 296-amino-acid chain; its full sequence is Circadian clock oscillator protein KaiA (296 aa).

The segment at 2-133 is psR domain, binds oxidized quinones; sequence ARPGLTIALL…LRQGRADGRS (132 aa). Residues 2–152 enclose the KaiA N-terminal domain; sequence ARPGLTIALL…KLSRRLQERL (151 aa). Residues 153–161 are flexible linker; that stretch reads GYLGVFYKR. Residues 162–270 enclose the KaiA C-terminal domain; the sequence is DPSRFLGSLP…CEMYRRSIPP (109 aa).

In terms of assembly, homodimer. The KaiABC complex composition changes during the circadian cycle to control KaiC phosphorylation. Complexes KaiC(6), KaiA(2-4):KaiC(6), KaiB(6):KaiC(6) and KaiC(6):KaiB(6):KaiA(12) are among the most important forms, many form cooperatively. KaiA and CikA bind to the same region of the KaiB(fs) form and therefore compete.

Its function is as follows. Key component of the KaiABC oscillator complex, which constitutes the main circadian regulator in cyanobacteria. Complex composition changes during the circadian cycle to control KaiC phosphorylation. KaiA stimulates KaiC autophosphorylation, while KaiB sequesters KaiA, leading to KaiC autodephosphorylation. KaiA binding to the KaiC CII domain during the subjective day yields KaiA(2-4):KaiC(6) complexes which stimulate KaiC autophosphorylation. Phospho-Ser-431 KaiC accumulation triggers binding of KaiB during the subjective night to form the KaiB(6):KaiC(6) complex, leading to changes in the output regulators CikA and SasA. KaiB(6):KaiC(6) formation exposes a site for KaiA binding on KaiB that sequesters KaiA from KaiC's CII domain, making the KaiC(6):KaiB(6):KaiA(12) complex resulting in KaiC autodephosphorylation. Complete dephosphorylation of KaiC leads to dissociation of KaiA(2):KaiB(1), completing 1 cycle of the Kai oscillator. Functionally, binds oxidized quinones via the N-terminal PsR domain, allowing it to sense redox changes and possibly mediate clock input. This is Circadian clock oscillator protein KaiA from Parasynechococcus marenigrum (strain WH8102).